The primary structure comprises 75 residues: MLNNNVVYLGYPGLPPNKLEGLMLELRTVGPSFGLEFRFQDTPRRGKNYTQMHILKQRFKTRAFVMHYKPRKEKF.

This is an uncharacterized protein from Escherichia coli (Bacteriophage T4).